The following is a 251-amino-acid chain: Probable transcriptional regulatory protein Arth_2304 (251 aa).

Belongs to the TACO1 family.

The protein localises to the cytoplasm. The chain is Probable transcriptional regulatory protein Arth_2304 from Arthrobacter sp. (strain FB24).